The following is a 463-amino-acid chain: GTPase Der (463 aa).

2 EngA-type G domains span residues 3-166 (PVVA…PESG) and 177-350 (IRIA…QSAM). GTP-binding positions include 9 to 16 (GRTNVGKS), 56 to 60 (DTGGI), 118 to 121 (NKID), 183 to 190 (GRPNVGKS), 230 to 234 (DTAGI), and 295 to 298 (NKWD). The KH-like domain maps to 351–435 (LDLSASRLTQ…PLKLVFKSAE (85 aa)).

It belongs to the TRAFAC class TrmE-Era-EngA-EngB-Septin-like GTPase superfamily. EngA (Der) GTPase family. As to quaternary structure, associates with the 50S ribosomal subunit.

Its function is as follows. GTPase that plays an essential role in the late steps of ribosome biogenesis. In Methylococcus capsulatus (strain ATCC 33009 / NCIMB 11132 / Bath), this protein is GTPase Der.